We begin with the raw amino-acid sequence, 234 residues long: Purine nucleoside phosphorylase DeoD-type (234 aa).

His4 provides a ligand contact to a purine D-ribonucleoside. Residues Gly20, Arg24, Arg43, and 87–90 (RIGT) each bind phosphate. A purine D-ribonucleoside-binding positions include 179 to 181 (EME) and 203 to 204 (SD). Asp204 functions as the Proton donor in the catalytic mechanism.

The protein belongs to the PNP/UDP phosphorylase family. Homohexamer; trimer of homodimers.

The enzyme catalyses a purine D-ribonucleoside + phosphate = a purine nucleobase + alpha-D-ribose 1-phosphate. It carries out the reaction a purine 2'-deoxy-D-ribonucleoside + phosphate = a purine nucleobase + 2-deoxy-alpha-D-ribose 1-phosphate. In terms of biological role, catalyzes the reversible phosphorolytic breakdown of the N-glycosidic bond in the beta-(deoxy)ribonucleoside molecules, with the formation of the corresponding free purine bases and pentose-1-phosphate. The protein is Purine nucleoside phosphorylase DeoD-type of Helicobacter pylori (strain Shi470).